The sequence spans 75 residues: Sec-independent protein translocase protein TatA (75 aa).

The chain crosses the membrane as a helical span at residues 1-21 (MGSFSIWHWLIVLVIVLLVFG). Residues 41–75 (KGMHDDDKPAGKLGDDSRSAEQAREAQAERDRDAR) are disordered.

It belongs to the TatA/E family. As to quaternary structure, the Tat system comprises two distinct complexes: a TatABC complex, containing multiple copies of TatA, TatB and TatC subunits, and a separate TatA complex, containing only TatA subunits. Substrates initially bind to the TatABC complex, which probably triggers association of the separate TatA complex to form the active translocon.

Its subcellular location is the cell inner membrane. Part of the twin-arginine translocation (Tat) system that transports large folded proteins containing a characteristic twin-arginine motif in their signal peptide across membranes. TatA could form the protein-conducting channel of the Tat system. The polypeptide is Sec-independent protein translocase protein TatA (Xanthomonas campestris pv. campestris (strain 8004)).